A 365-amino-acid polypeptide reads, in one-letter code: Chorismate synthase (365 aa).

Residue Arg-48 coordinates NADP(+). Residues 130-132, 242-243, Gly-290, 305-309, and Arg-331 contribute to the FMN site; these read RSS, NA, and KPTSS.

The protein belongs to the chorismate synthase family. As to quaternary structure, homotetramer. It depends on FMNH2 as a cofactor.

It catalyses the reaction 5-O-(1-carboxyvinyl)-3-phosphoshikimate = chorismate + phosphate. It functions in the pathway metabolic intermediate biosynthesis; chorismate biosynthesis; chorismate from D-erythrose 4-phosphate and phosphoenolpyruvate: step 7/7. In terms of biological role, catalyzes the anti-1,4-elimination of the C-3 phosphate and the C-6 proR hydrogen from 5-enolpyruvylshikimate-3-phosphate (EPSP) to yield chorismate, which is the branch point compound that serves as the starting substrate for the three terminal pathways of aromatic amino acid biosynthesis. This reaction introduces a second double bond into the aromatic ring system. The protein is Chorismate synthase of Erythrobacter litoralis (strain HTCC2594).